A 223-amino-acid polypeptide reads, in one-letter code: Class E basic helix-loop-helix protein 23 (223 aa).

The disordered stretch occupies residues Pro32–Pro93. Residues Ser98 to Gln152 form the bHLH domain.

As to expression, expressed in brain and retina.

It localises to the nucleus. Functionally, may function as transcriptional repressor. May modulate the expression of genes required for the differentiation and/or maintenance of pancreatic and neuronal cell types. May be important for rod bipolar cell maturation. In Mus musculus (Mouse), this protein is Class E basic helix-loop-helix protein 23 (Bhlhe23).